The chain runs to 184 residues: GTP cyclohydrolase 1 (184 aa).

Zn(2+)-binding residues include cysteine 75, histidine 78, and cysteine 146.

This sequence belongs to the GTP cyclohydrolase I family. As to quaternary structure, homomer.

It carries out the reaction GTP + H2O = 7,8-dihydroneopterin 3'-triphosphate + formate + H(+). The protein operates within cofactor biosynthesis; 7,8-dihydroneopterin triphosphate biosynthesis; 7,8-dihydroneopterin triphosphate from GTP: step 1/1. In Streptococcus pneumoniae (strain Hungary19A-6), this protein is GTP cyclohydrolase 1.